The sequence spans 259 residues: Bidirectional sugar transporter SWEET6a (259 aa).

The Extracellular portion of the chain corresponds to Met1 to Asn9. A helical transmembrane segment spans residues Val10–Phe30. The region spanning Val10–Lys98 is the MtN3/slv 1 domain. Residues Trp31–Asp45 lie on the Cytoplasmic side of the membrane. A helical transmembrane segment spans residues Pro46–His66. The Extracellular segment spans residues Pro67–Ser69. A helical membrane pass occupies residues Ile70 to Phe90. Over Phe91–Cys103 the chain is Cytoplasmic. Residues Ala104–Ala124 form a helical membrane-spanning segment. The Extracellular segment spans residues His125–Ser131. Residues Met132–Ile152 form a helical membrane-spanning segment. The MtN3/slv 2 domain maps to Ile133–Thr216. The Cytoplasmic portion of the chain corresponds to Met153–Met165. The helical transmembrane segment at Pro166 to Ile186 threads the bilayer. At Arg187 to Asp189 the chain is on the extracellular side. The helical transmembrane segment at Ile190 to Tyr210 threads the bilayer. At Ala211 to Arg259 the chain is on the cytoplasmic side.

The protein belongs to the SWEET sugar transporter family. Forms homooligomers and/or heterooligomers.

The protein localises to the cell membrane. Its function is as follows. Mediates both low-affinity uptake and efflux of sugar across the plasma membrane. This Oryza sativa subsp. indica (Rice) protein is Bidirectional sugar transporter SWEET6a (SWEET6A).